The chain runs to 160 residues: MMTSLLTISMFVVAIQAFDSSEIRMLDEQYDTKNPFFQFLENSKRSDRPTRAMDSPLIRFGKRAADGAPLIRFGRAPEASPFIRFGKRAADGAPLIRFGRAPEASPFIRFGKRASPSAPLIRFGRSPSAVPLIRFGRSAAAPLIRFGRASSAPLIRFGRK.

An N-terminal signal peptide occupies residues 1–17 (MMTSLLTISMFVVAIQA). Positions 18 to 43 (FDSSEIRMLDEQYDTKNPFFQFLENS) are excised as a propeptide. A phenylalanine amide mark is found at Phe60, Phe73, Phe85, Phe98, Phe110, Phe123, Phe135, Phe146, and Phe157.

This sequence belongs to the FARP (FMRFamide related peptide) family. In terms of tissue distribution, expressed in the ASE sensory neurons, the DD motor neurons, the 15, M3 and M5 cholinergic pharyngeal motoneurons, and the ASG, ASK and BAG neurons.

It is found in the secreted. In terms of biological role, probable FMRFamide-like neuropeptides. Binds to neuronal receptors such as dmsr-1 to promote sleep in response to cellular stress also known as stress-induced sleep (SIS). Plays a role in behaviors associated with SIS, acting in concert with the FMRFamide related peptide, flp-24 and neuropeptide-like protein nlp-8. Functionally, AADGAPLIRF-amide: Inhibits muscle tension in somatic muscle. Acts as a ligand for the npr-22 receptor in vitro. Acts as a ligand for isoform a of the dmsr-1 G-protein coupled receptor in vitro. Its function is as follows. APEASPFIRF-amide: Inhibits muscle tension in somatic muscle. Potent inhibitor of the activity of the dissected pharyngeal myogenic muscle system. Acts as a ligand for isoform a of the dmsr-1 G-protein coupled receptor in vitro. Acts as a ligand for the npr-22 receptor in vitro. Acts as a ligand for isoform a of the dmsr-1 G-protein coupled receptor in vitro. In terms of biological role, acts as a ligand for isoform a of the dmsr-1 G-protein coupled receptor in vitro. The chain is FMRFamide-like neuropeptides 13 from Caenorhabditis elegans.